The chain runs to 628 residues: DNA-directed RNA polymerase subunit gamma (628 aa).

The Zn(2+) site is built by Cys-71, Cys-73, Cys-86, and Cys-89. Mg(2+) contacts are provided by Asp-467, Asp-469, and Asp-471.

This sequence belongs to the RNA polymerase beta' chain family. RpoC1 subfamily. In cyanobacteria the RNAP catalytic core is composed of 2 alpha, 1 beta, 1 beta', 1 gamma and 1 omega subunit. When a sigma factor is associated with the core the holoenzyme is formed, which can initiate transcription. Mg(2+) serves as cofactor. Requires Zn(2+) as cofactor.

The enzyme catalyses RNA(n) + a ribonucleoside 5'-triphosphate = RNA(n+1) + diphosphate. Its function is as follows. DNA-dependent RNA polymerase catalyzes the transcription of DNA into RNA using the four ribonucleoside triphosphates as substrates. This Crocosphaera subtropica (strain ATCC 51142 / BH68) (Cyanothece sp. (strain ATCC 51142)) protein is DNA-directed RNA polymerase subunit gamma.